The primary structure comprises 413 residues: MKCGWREGNQIQLLENGDQFYPAVFEAIAQAQQKIILETFILFEDEVGKKLHAALLKAAQRGVKAEVLLDGYGSPDLSDAFVGELTSAGVIFRYYDPRPRLLGLRTNIFRRMHRKIVVIDDRIAFVGGINYSAEHMSDYGPQAKQDYAVRVEGPVVADILQFEVENLPGQSPARRWWKRHHQAEENRHPGEAQALFVWRDNEEHRDDIERHYLKMLTQAKREVIIANAYFFPGYRLLHAMRKAARRGVSVKLIVQGEPDMPIVKVGARLLYNYLVKGGVQVYEYRRRPLHGKVALMDDHWATVGSSNLDPLSLSLNLEANLIIHDRTFNQTLRDNLQGIIVNDCKQVDESMLPKRTWWNLTKSVLAFHFLRHFPALVGWLPAHTPHLAQVPPPAQPEMETQDRVDPENSGVKP.

2 PLD phosphodiesterase domains span residues 108 to 135 (IFRR…SAEH) and 285 to 312 (RRRP…DPLS). Catalysis depends on residues histidine 113, lysine 115, aspartate 120, histidine 290, lysine 292, and aspartate 297. A disordered region spans residues 388–413 (AQVPPPAQPEMETQDRVDPENSGVKP).

Belongs to the phospholipase D family. Cardiolipin synthase subfamily. ClsB sub-subfamily.

The protein resides in the cell membrane. It carries out the reaction 2 a 1,2-diacyl-sn-glycero-3-phospho-(1'-sn-glycerol) = a cardiolipin + glycerol. Functionally, catalyzes the phosphatidyl group transfer from one phosphatidylglycerol molecule to another to form cardiolipin (CL) (diphosphatidylglycerol) and glycerol. In Salmonella typhi, this protein is Cardiolipin synthase B.